We begin with the raw amino-acid sequence, 467 residues long: MMNKKNNKYKSDSLDSKEDKVDLYQDAMISNLISVNNKSTSDSDAKKPTENRIELLKNAYKGGTLKPMIDFDDHNTETFMDKRITKNLLDARSLFLSMGVKLIYIKSGTTGHTFKAISRSNKNVVFAVKVCAYPKDDYGGIKSSSRPENVEIRMLKILSYFVVNRLTPHLVLPIGTFHTDIEKFINIPEGVIDLKDEKNDMYKKFIERYHDGEFEKFVSVLISEWCNGGDLLDYIRKNYDSMTLETWTVVIFQLLFTLALIHEKFPAFRHNDMKANNILVEKTDNKHEGPDKWYRYSLGSHVFIIPGIGIQIKIWDFDFASIDGIVENKKVNADWTKKINISKKKNMYYDMHYFFNTLISKRFFPQFYEGGVPQEIVDFVHRIVPEEFRNGSDNINKKGRILVDVEYTTPFKVIMTDPLFEKYRYNQYYFHPQRNMAPKKSILFQQGNGSKQPVPKKSTGQKPTKKV.

The Protein kinase domain occupies 99-467; sequence GVKLIYIKSG…STGQKPTKKV (369 aa). Residues 105–113 and Lys129 contribute to the ATP site; that span reads IKSGTTGHT. Catalysis depends on Asp272, which acts as the Proton acceptor. The interval 443-467 is disordered; that stretch reads LFQQGNGSKQPVPKKSTGQKPTKKV. Over residues 458-467 the composition is skewed to polar residues; sequence STGQKPTKKV.

It belongs to the protein kinase superfamily. Ser/Thr protein kinase family.

The protein localises to the virion. It carries out the reaction L-seryl-[protein] + ATP = O-phospho-L-seryl-[protein] + ADP + H(+). The enzyme catalyses L-threonyl-[protein] + ATP = O-phospho-L-threonyl-[protein] + ADP + H(+). The chain is Putative serine/threonine-protein kinase R400 from Acanthamoeba polyphaga mimivirus (APMV).